Reading from the N-terminus, the 493-residue chain is Glycerol kinase (493 aa).

Thr12 is an ADP binding site. Residues Thr12, Thr13, and Ser14 each contribute to the ATP site. Thr12 contributes to the sn-glycerol 3-phosphate binding site. An ADP-binding site is contributed by Arg16. The sn-glycerol 3-phosphate site is built by Arg82, Glu83, Tyr132, and Asp239. Residues Arg82, Glu83, Tyr132, Asp239, and Gln240 each coordinate glycerol. Residues Thr261 and Gly303 each coordinate ADP. ATP contacts are provided by Thr261, Gly303, Gln307, and Gly402. ADP contacts are provided by Gly402 and Asn406.

Belongs to the FGGY kinase family.

The enzyme catalyses glycerol + ATP = sn-glycerol 3-phosphate + ADP + H(+). Its pathway is polyol metabolism; glycerol degradation via glycerol kinase pathway; sn-glycerol 3-phosphate from glycerol: step 1/1. In terms of biological role, key enzyme in the regulation of glycerol uptake and metabolism. Catalyzes the phosphorylation of glycerol to yield sn-glycerol 3-phosphate. The polypeptide is Glycerol kinase (Thermococcus onnurineus (strain NA1)).